Here is a 488-residue protein sequence, read N- to C-terminus: GTPase Der (488 aa).

EngA-type G domains lie at 3–166 and 199–372; these read PVVA…AEAM and IKLA…DSAT. Residues 9–16, 56–60, 118–121, 205–212, 252–256, and 317–320 each bind GTP; these read GRPNVGKS, DTGGI, NKID, GKPNVGKS, DTAGV, and NKWD. One can recognise a KH-like domain in the interval 373-457; sequence RRVSTSMLTR…PIQLRFQEGD (85 aa).

It belongs to the TRAFAC class TrmE-Era-EngA-EngB-Septin-like GTPase superfamily. EngA (Der) GTPase family. As to quaternary structure, associates with the 50S ribosomal subunit.

Its function is as follows. GTPase that plays an essential role in the late steps of ribosome biogenesis. The sequence is that of GTPase Der from Shewanella sp. (strain MR-7).